A 402-amino-acid polypeptide reads, in one-letter code: Thyroid hormone receptor alpha (402 aa).

The interval 1 to 22 is disordered; it reads MEQKPSTLDPLSEPEDTRWLDG. Residues 1–50 are modulating; sequence MEQKPSTLDPLSEPEDTRWLDGKRKRKSSQCLVKSSMSGYIPSYLDKDEQ. Phosphoserine; by CK2 is present on serine 12. Serine 28 carries the phosphoserine modification. Zn(2+)-binding residues include cysteine 51, cysteine 54, cysteine 68, cysteine 71, cysteine 89, cysteine 95, cysteine 105, and cysteine 108. 2 consecutive NR C4-type zinc fingers follow at residues 51-71 and 89-113; these read CVVC…CAGC and CKYD…FKKC. Positions 51–125 form a DNA-binding region, nuclear receptor; sequence CVVCGDKATG…VGMAMDLVLY (75 aa). Positions 161-402 constitute an NR LBD domain; sequence EEWELIHVVT…ELFPPLFLEV (242 aa). Residues arginine 226 and serine 275 each coordinate 3,3',5-triiodo-L-thyronine.

This sequence belongs to the nuclear hormone receptor family. NR1 subfamily. As to quaternary structure, probably interacts with SFPQ.

Its subcellular location is the nucleus. Functionally, nuclear hormone receptor that can act as a repressor or activator of transcription. High affinity receptor for thyroid hormones, including triiodothyronine and thyroxine. The chain is Thyroid hormone receptor alpha (THRA) from Pygoscelis adeliae (Adelie penguin).